A 686-amino-acid polypeptide reads, in one-letter code: Osmo-dependent choline transporter BetT2 (686 aa).

Residues 1–22 lie on the Cytoplasmic side of the membrane; that stretch reads MATDNPRAVDDQETHPKDRLNR. The helical transmembrane segment at 23–43 threads the bilayer; it reads VVFYVSALIILIFSLTTILFN. The Periplasmic portion of the chain corresponds to 44–60; the sequence is DFANRALNQVLDWVSST. Residues 61-81 traverse the membrane as a helical segment; that stretch reads FSWYYLLAATLYMVFVIFIAC. Topologically, residues 82-100 are cytoplasmic; sequence SRYGNIKLGPKHSKPEFSL. The chain crosses the membrane as a helical span at residues 101–121; that stretch reads LSWSAMLFSAGIGIDLMFFSV. The Periplasmic segment spans residues 122-150; it reads AEPLSHYMHPPVGEGQTYEAARQGMVWTL. The helical transmembrane segment at 151 to 171 threads the bilayer; the sequence is FHYGLTGWCMYALIGMALGYF. Topologically, residues 172 to 203 are cytoplasmic; sequence SYRYNLPLTIRSALYPIFGKKINGPIGHSVDT. A helical transmembrane segment spans residues 204–224; that stretch reads AAVIGTIFGIATTCGIGVVQL. The Periplasmic segment spans residues 225–237; sequence NYGLHVLFDLPEN. Residues 238–258 form a helical membrane-spanning segment; sequence LWVQTALILVAVIITIISVTS. Over 259–265 the chain is Cytoplasmic; sequence GVNKGLR. The chain crosses the membrane as a helical span at residues 266–286; the sequence is ILSEVNIYVSVGLMLFILFLG. The Periplasmic segment spans residues 287–325; sequence NTEFLLNALVQNVGDYLSRFPSLALESFAFDQPKEWMNS. The chain crosses the membrane as a helical span at residues 326-346; sequence WTLFFWAWWVAWSPFVGLFLA. The Cytoplasmic portion of the chain corresponds to 347–356; that stretch reads RISRGRTIRE. Residues 357-377 form a helical membrane-spanning segment; the sequence is FVSGTLIIPLLFTLTWLSIFG. Residues 378–412 lie on the Periplasmic side of the membrane; that stretch reads NSALHNVIFDGNIALAETVLSNPAHGFYDLLAQYP. The chain crosses the membrane as a helical span at residues 413–433; the sequence is WFPFIAGVATITGLLFYVTSA. At 434–459 the chain is on the cytoplasmic side; that stretch reads DSGALVLGNFTTQFTNIDHDAPRWLS. The chain crosses the membrane as a helical span at residues 460-480; it reads VFWAVAIGLLTLAMLMTNGIT. Over 481–484 the chain is Periplasmic; that stretch reads ALQN. Residues 485–505 form a helical membrane-spanning segment; that stretch reads ATIIMGLPFSFVMFLVMAGLY. The Cytoplasmic portion of the chain corresponds to 506-686; sequence KSLRLEDYRQ…NRPLFPDPKA (181 aa).

It belongs to the BCCT transporter (TC 2.A.15) family.

It is found in the cell inner membrane. Uptake of choline in the presence of high salinity. May primarily serve for osmoprotection. The polypeptide is Osmo-dependent choline transporter BetT2 (Acinetobacter baylyi (strain ATCC 33305 / BD413 / ADP1)).